The following is a 91-amino-acid chain: Large ribosomal subunit protein uL23 (91 aa).

Belongs to the universal ribosomal protein uL23 family. In terms of assembly, part of the 50S ribosomal subunit. Contacts protein L29, and trigger factor when it is bound to the ribosome.

One of the early assembly proteins it binds 23S rRNA. One of the proteins that surrounds the polypeptide exit tunnel on the outside of the ribosome. Forms the main docking site for trigger factor binding to the ribosome. This is Large ribosomal subunit protein uL23 from Staphylococcus epidermidis (strain ATCC 35984 / DSM 28319 / BCRC 17069 / CCUG 31568 / BM 3577 / RP62A).